A 261-amino-acid polypeptide reads, in one-letter code: Cytochrome c oxidase subunit 3 (261 aa).

At 1–15 the chain is on the mitochondrial matrix side; it reads MTHQTHAYHMVNPSP. Residues 16–34 form a helical membrane-spanning segment; that stretch reads WPLTGALSALLMTSGLTMW. Residues 35-40 lie on the Mitochondrial intermembrane side of the membrane; the sequence is FHFNST. The chain crosses the membrane as a helical span at residues 41–66; that stretch reads ILLMLGLTTNMLTMYQWWRDIIREST. The Mitochondrial matrix portion of the chain corresponds to 67–72; it reads FQGHHT. The chain crosses the membrane as a helical span at residues 73-105; the sequence is PVVQKGLRYGMILFIISEVLFFTGFFWAFYHSS. Residues 106-128 lie on the Mitochondrial intermembrane side of the membrane; sequence LAPTPELGGCWPPTGIHPLNPLE. The helical transmembrane segment at 129-152 threads the bilayer; sequence VPLLNTSVLLASGVSITWAHHSLM. Residues 153–155 are Mitochondrial matrix-facing; that stretch reads EGH. Residues 156-183 form a helical membrane-spanning segment; sequence RNHMLQALFITIALGVYFTLLQASEYYE. The Mitochondrial intermembrane portion of the chain corresponds to 184–190; it reads APFTISD. The helical transmembrane segment at 191 to 223 threads the bilayer; sequence GVYGSTFFVATGFHGLHVIIGSTFLIVCFFRQL. Residues 224-232 lie on the Mitochondrial matrix side of the membrane; that stretch reads KFHFTSSHH. The chain crosses the membrane as a helical span at residues 233–256; it reads FGFEAAAWYWHFVDVVWLFLYVSI. At 257-261 the chain is on the mitochondrial intermembrane side; sequence YWWGS.

It belongs to the cytochrome c oxidase subunit 3 family. In terms of assembly, component of the cytochrome c oxidase (complex IV, CIV), a multisubunit enzyme composed of 14 subunits. The complex is composed of a catalytic core of 3 subunits MT-CO1, MT-CO2 and MT-CO3, encoded in the mitochondrial DNA, and 11 supernumerary subunits COX4I, COX5A, COX5B, COX6A, COX6B, COX6C, COX7A, COX7B, COX7C, COX8 and NDUFA4, which are encoded in the nuclear genome. The complex exists as a monomer or a dimer and forms supercomplexes (SCs) in the inner mitochondrial membrane with NADH-ubiquinone oxidoreductase (complex I, CI) and ubiquinol-cytochrome c oxidoreductase (cytochrome b-c1 complex, complex III, CIII), resulting in different assemblies (supercomplex SCI(1)III(2)IV(1) and megacomplex MCI(2)III(2)IV(2)).

It is found in the mitochondrion inner membrane. It catalyses the reaction 4 Fe(II)-[cytochrome c] + O2 + 8 H(+)(in) = 4 Fe(III)-[cytochrome c] + 2 H2O + 4 H(+)(out). Functionally, component of the cytochrome c oxidase, the last enzyme in the mitochondrial electron transport chain which drives oxidative phosphorylation. The respiratory chain contains 3 multisubunit complexes succinate dehydrogenase (complex II, CII), ubiquinol-cytochrome c oxidoreductase (cytochrome b-c1 complex, complex III, CIII) and cytochrome c oxidase (complex IV, CIV), that cooperate to transfer electrons derived from NADH and succinate to molecular oxygen, creating an electrochemical gradient over the inner membrane that drives transmembrane transport and the ATP synthase. Cytochrome c oxidase is the component of the respiratory chain that catalyzes the reduction of oxygen to water. Electrons originating from reduced cytochrome c in the intermembrane space (IMS) are transferred via the dinuclear copper A center (CU(A)) of subunit 2 and heme A of subunit 1 to the active site in subunit 1, a binuclear center (BNC) formed by heme A3 and copper B (CU(B)). The BNC reduces molecular oxygen to 2 water molecules using 4 electrons from cytochrome c in the IMS and 4 protons from the mitochondrial matrix. The protein is Cytochrome c oxidase subunit 3 (MT-CO3) of Tragelaphus strepsiceros (Greater kudu).